The following is a 434-amino-acid chain: MQSEAQSPRSSQICSTEPVFGGHQPRRVSHAVDVRWGGQLVTIGGDAPVRVQSMTNTDTADAIGTAIQIKELANAGSELVRITVNTPEAAAAVPAIREQLDRMGVTVPLVGDFHYNGHLLLRDYPGCAEALSKYRINPGNVGQGAKRDTQFALMIEAAAKYDKAVRIGVNWGSLDQDLLARMMDENGARAQPWGAQSVMYEALIQSAIGSAERAVELGLGRDRIVLSCKVSGVQDLIAVYRELGRRCGFALHLGLTEAGMGSKGIVASTAALGVLLQEGIGDTIRISLTPEPGAPRTGEVIVGQEILQTMGLRSFAPMVIACPGCGRTTSTLFQELAMQIQTYLREQMPVWRKEYPGVEKMNVAVMGCIVNGPGESKHANIGISLPGSGENPAAPVFIDGEKVKTLRGERIAEEFQQIVSDYVARNYGRTEALN.

Residues 1 to 15 are compositionally biased toward polar residues; sequence MQSEAQSPRSSQICS. The interval 1 to 24 is disordered; it reads MQSEAQSPRSSQICSTEPVFGGHQ. Positions 322, 325, 368, and 375 each coordinate [4Fe-4S] cluster.

This sequence belongs to the IspG family. [4Fe-4S] cluster serves as cofactor.

It catalyses the reaction (2E)-4-hydroxy-3-methylbut-2-enyl diphosphate + oxidized [flavodoxin] + H2O + 2 H(+) = 2-C-methyl-D-erythritol 2,4-cyclic diphosphate + reduced [flavodoxin]. The protein operates within isoprenoid biosynthesis; isopentenyl diphosphate biosynthesis via DXP pathway; isopentenyl diphosphate from 1-deoxy-D-xylulose 5-phosphate: step 5/6. Functionally, converts 2C-methyl-D-erythritol 2,4-cyclodiphosphate (ME-2,4cPP) into 1-hydroxy-2-methyl-2-(E)-butenyl 4-diphosphate. This Burkholderia ambifaria (strain MC40-6) protein is 4-hydroxy-3-methylbut-2-en-1-yl diphosphate synthase (flavodoxin).